A 418-amino-acid chain; its full sequence is Gamma-glutamyl phosphate reductase (418 aa).

It belongs to the gamma-glutamyl phosphate reductase family.

The protein localises to the cytoplasm. It catalyses the reaction L-glutamate 5-semialdehyde + phosphate + NADP(+) = L-glutamyl 5-phosphate + NADPH + H(+). It participates in amino-acid biosynthesis; L-proline biosynthesis; L-glutamate 5-semialdehyde from L-glutamate: step 2/2. In terms of biological role, catalyzes the NADPH-dependent reduction of L-glutamate 5-phosphate into L-glutamate 5-semialdehyde and phosphate. The product spontaneously undergoes cyclization to form 1-pyrroline-5-carboxylate. The protein is Gamma-glutamyl phosphate reductase of Geobacter metallireducens (strain ATCC 53774 / DSM 7210 / GS-15).